The chain runs to 413 residues: Gamma-glutamyl phosphate reductase (413 aa).

This sequence belongs to the gamma-glutamyl phosphate reductase family.

It localises to the cytoplasm. The catalysed reaction is L-glutamate 5-semialdehyde + phosphate + NADP(+) = L-glutamyl 5-phosphate + NADPH + H(+). The protein operates within amino-acid biosynthesis; L-proline biosynthesis; L-glutamate 5-semialdehyde from L-glutamate: step 2/2. Functionally, catalyzes the NADPH-dependent reduction of L-glutamate 5-phosphate into L-glutamate 5-semialdehyde and phosphate. The product spontaneously undergoes cyclization to form 1-pyrroline-5-carboxylate. The chain is Gamma-glutamyl phosphate reductase from Lactococcus lactis subsp. cremoris (strain SK11).